Consider the following 188-residue polypeptide: MGERIKSTMDLLIYLQNSHLATGFGFNTNLFETNLINLAVVIGVLVYFGKGVLTTLLNNRKETIVNTIRDAEERYQEATEKLNKAYTRLEQAKAKAEEIRVNGLAQMEIEKQELIKAADEDSKRLEDSKNATLRFEEQRAIEQVRQQVSRLALELALETLKTRLNRDLHAQMIDYHIGLLQSMESVID.

The helical transmembrane segment at 35–57 threads the bilayer; that stretch reads LINLAVVIGVLVYFGKGVLTTLL.

This sequence belongs to the ATPase B chain family. As to quaternary structure, F-type ATPases have 2 components, F(1) - the catalytic core - and F(0) - the membrane proton channel. F(1) has five subunits: alpha(3), beta(3), gamma(1), delta(1), epsilon(1). F(0) has four main subunits: a(1), b(1), b'(1) and c(10-14). The alpha and beta chains form an alternating ring which encloses part of the gamma chain. F(1) is attached to F(0) by a central stalk formed by the gamma and epsilon chains, while a peripheral stalk is formed by the delta, b and b' chains.

The protein resides in the plastid. The protein localises to the chloroplast thylakoid membrane. Functionally, f(1)F(0) ATP synthase produces ATP from ADP in the presence of a proton or sodium gradient. F-type ATPases consist of two structural domains, F(1) containing the extramembraneous catalytic core and F(0) containing the membrane proton channel, linked together by a central stalk and a peripheral stalk. During catalysis, ATP synthesis in the catalytic domain of F(1) is coupled via a rotary mechanism of the central stalk subunits to proton translocation. In terms of biological role, component of the F(0) channel, it forms part of the peripheral stalk, linking F(1) to F(0). The sequence is that of ATP synthase subunit b, chloroplastic from Zygnema circumcarinatum (Green alga).